The following is a 717-amino-acid chain: Homeobox protein araucan (717 aa).

Disordered stretches follow at residues 46 to 80 (APAM…PNAL), 94 to 130 (GGSS…GGGG), 317 to 371 (NKMT…AIDE), 395 to 418 (SGGY…YHHQ), 478 to 516 (TPPP…AGRD), 549 to 615 (TNNS…ASQR), and 675 to 717 (ARLG…KFTN). The span at 94-103 (GGSSAGGGGP) shows a compositional bias: gly residues. Positions 255 to 317 (LAARRKNATR…NARRRLKKEN (63 aa)) form a DNA-binding region, homeobox; TALE-type. The segment covering 317–327 (NKMTWEPKNRT) has biased composition (basic and acidic residues). Ser-336 is subject to Phosphoserine. Residues 337–347 (DDEKDKEDLEP) are compositionally biased toward basic and acidic residues. Over residues 395–410 (SGGYPGGGGSSSGHPG) the composition is skewed to gly residues. Composition is skewed to low complexity over residues 492–507 (QQQQ…AQHQ), 559–589 (PPQQ…GPII), 599–614 (QQQQ…TASQ), and 687–698 (SSGNSSSSSSSS).

It belongs to the TALE/IRO homeobox family.

It localises to the nucleus. Controls proneural and vein forming genes. Positive transcriptional controller of AC-SC (achaete-scute). May act as an activator that interacts with the transcriptional complex assembled on the AC and SC promoters and participates in transcription initiation. In Drosophila melanogaster (Fruit fly), this protein is Homeobox protein araucan (ara).